Reading from the N-terminus, the 289-residue chain is Shikimate dehydrogenase (NADP(+)) (289 aa).

Shikimate is bound by residues 19–21 (SLS) and Thr-66. The active-site Proton acceptor is Lys-70. The shikimate site is built by Asn-91 and Asp-106. NADP(+) contacts are provided by residues 131-135 (GNGGA) and Leu-229. Position 231 (Tyr-231) interacts with shikimate. Residue Gly-252 participates in NADP(+) binding.

This sequence belongs to the shikimate dehydrogenase family. In terms of assembly, homodimer.

It catalyses the reaction shikimate + NADP(+) = 3-dehydroshikimate + NADPH + H(+). It participates in metabolic intermediate biosynthesis; chorismate biosynthesis; chorismate from D-erythrose 4-phosphate and phosphoenolpyruvate: step 4/7. In terms of biological role, involved in the biosynthesis of the chorismate, which leads to the biosynthesis of aromatic amino acids. Catalyzes the reversible NADPH linked reduction of 3-dehydroshikimate (DHSA) to yield shikimate (SA). The chain is Shikimate dehydrogenase (NADP(+)) from Nostoc sp. (strain PCC 7120 / SAG 25.82 / UTEX 2576).